Reading from the N-terminus, the 537-residue chain is Glucose-6-phosphate isomerase (537 aa).

Residue Glu341 is the Proton donor of the active site. Residues His372 and Lys501 contribute to the active site.

It belongs to the GPI family.

It is found in the cytoplasm. The enzyme catalyses alpha-D-glucose 6-phosphate = beta-D-fructose 6-phosphate. Its pathway is carbohydrate biosynthesis; gluconeogenesis. It functions in the pathway carbohydrate degradation; glycolysis; D-glyceraldehyde 3-phosphate and glycerone phosphate from D-glucose: step 2/4. Its function is as follows. Catalyzes the reversible isomerization of glucose-6-phosphate to fructose-6-phosphate. The polypeptide is Glucose-6-phosphate isomerase (Jannaschia sp. (strain CCS1)).